The following is a 692-amino-acid chain: Hexamerin-1.1 (692 aa).

The first 18 residues, 1–18 (MKLLILAVAISLAVLASG), serve as a signal peptide directing secretion. An N-linked (GlcNAc...) asparagine glycan is attached at asparagine 203.

This sequence belongs to the hemocyanin family. As to quaternary structure, homohexamer. In terms of tissue distribution, larval fat body.

It is found in the secreted. Its subcellular location is the extracellular space. In terms of biological role, larval storage protein (LSP) which may serve as a store of amino acids for synthesis of adult proteins. The protein is Hexamerin-1.1 (HexA) of Anopheles gambiae (African malaria mosquito).